A 416-amino-acid chain; its full sequence is MWASFMWHGALSPGRRAHSALAQLRCILDSELEGIRGAGTWKSERVITSRQGPSIRVDGISGGILNFCANNYLGLSSHPAVIQAGLQTLEEFGAGLSSTRFICGTQSIHKNLEAKIAHFHQREDAILYPSCFDANAGLFEALLTPEDAVLSDELNHASIIDGIRLCKAHKYRYRHLDMADLEAKLKEAQKHRLRLVATDGAFSMDGDIAPLQDICRLAAQYGALVFVDECHATGFLGPTGRGTDELLGVMDQVTIINSTLGKALGGASGGYTTGPEPLVSLLRQRSRPYLFSNSLPPAVVGCASKALDLLMESNAIIQSMAAKTRRFRSKMEAAGFTVSGADHPICPVMLGDARLSSQMADDMLKKGIFVIGFSYPVVPKGKARIRVQISAVHSEEDIDRCVEAFVEVGRLHGALP.

The N-terminal 18 residues, 1 to 18 (MWASFMWHGALSPGRRAH), are a transit peptide targeting the mitochondrion. Lys42 bears the N6-acetyllysine; alternate mark. The residue at position 42 (Lys42) is an N6-succinyllysine; alternate. A pyridoxal 5'-phosphate-binding site is contributed by 131–132 (CF). His156 serves as a coordination point for substrate. The residue at position 184 (Lys184) is an N6-acetyllysine; alternate. Lys184 bears the N6-succinyllysine; alternate mark. Pyridoxal 5'-phosphate-binding positions include Ser203, 259 to 262 (TLGK), and 292 to 293 (SN). Position 262 is an N6-(pyridoxal phosphate)lysine (Lys262). 2 positions are modified to N6-succinyllysine: Lys323 and Lys365. Residue Lys380 is modified to N6-acetyllysine; alternate. Lys380 is subject to N6-succinyllysine; alternate. Substrate is bound at residue Arg386.

It belongs to the class-II pyridoxal-phosphate-dependent aminotransferase family. Pyridoxal 5'-phosphate serves as cofactor.

It is found in the mitochondrion. The protein localises to the nucleus. The catalysed reaction is glycine + acetyl-CoA = (2S)-2-amino-3-oxobutanoate + CoA. It participates in amino-acid degradation; L-threonine degradation via oxydo-reductase pathway; glycine from L-threonine: step 2/2. In terms of biological role, pyridoxal phosphate (PLP) dependent enzyme, which catalyzes the cleavage of 2-amino-3-oxobutanoate to glycine and acetyl-CoA. Catalyzes the second reaction step on the main metabolic degradation pathway for L-threonine. This is 2-amino-3-ketobutyrate coenzyme A ligase, mitochondrial (Gcat) from Mus musculus (Mouse).